The following is a 214-amino-acid chain: Outer-membrane lipoprotein LolB (214 aa).

The signal sequence occupies residues 1 to 25 (MNNLKRFTKSIFSCIALSGLLFLGG). The N-palmitoyl cysteine moiety is linked to residue cysteine 26. The S-diacylglycerol cysteine moiety is linked to residue cysteine 26.

Belongs to the LolB family. Monomer.

It is found in the cell outer membrane. Functionally, plays a critical role in the incorporation of lipoproteins in the outer membrane after they are released by the LolA protein. The protein is Outer-membrane lipoprotein LolB of Shewanella sp. (strain MR-7).